Consider the following 55-residue polypeptide: Histone H1 (55 aa).

Positions 1–15 are enriched in low complexity; sequence MAEVAPAPAAAAPAK. The disordered stretch occupies residues 1–28; it reads MAEVAPAPAAAAPAKAPKKKAAAKPKKA. At Ala-2 the chain carries N-acetylalanine. Residues 16-27 show a composition bias toward basic residues; it reads APKKKAAAKPKK. One can recognise an H15 domain in the interval 28-55; sequence AGPSVGELIVKAVSASKERSGVSLAALK.

This sequence belongs to the histone H1/H5 family.

The protein resides in the nucleus. It localises to the chromosome. Its subcellular location is the secreted. Functionally, histones H1 are necessary for the condensation of nucleosome chains into higher-order structures. SAMP H1 has antibacterial activity against Gram-negative bacteria E.coli, A.salmonicida subsp salmonicida, V.anguillarum and S.typhimurium and Gram-positive bacteria B.subtilis and L.ivanovii. In Salmo salar (Atlantic salmon), this protein is Histone H1.